Reading from the N-terminus, the 329-residue chain is GTP 3',8-cyclase (329 aa).

One can recognise a Radical SAM core domain in the interval A8–A234. Position 17 (R17) interacts with GTP. Residues C24 and C28 each contribute to the [4Fe-4S] cluster site. An S-adenosyl-L-methionine-binding site is contributed by Y30. [4Fe-4S] cluster is bound at residue C31. GTP is bound at residue R68. G72 provides a ligand contact to S-adenosyl-L-methionine. T99 serves as a coordination point for GTP. S123 is an S-adenosyl-L-methionine binding site. A GTP-binding site is contributed by K160. An S-adenosyl-L-methionine-binding site is contributed by M194. Residues C257 and C260 each contribute to the [4Fe-4S] cluster site. R262–R264 is a GTP binding site. C274 contributes to the [4Fe-4S] cluster binding site.

The protein belongs to the radical SAM superfamily. MoaA family. Monomer and homodimer. The cofactor is [4Fe-4S] cluster.

The enzyme catalyses GTP + AH2 + S-adenosyl-L-methionine = (8S)-3',8-cyclo-7,8-dihydroguanosine 5'-triphosphate + 5'-deoxyadenosine + L-methionine + A + H(+). It functions in the pathway cofactor biosynthesis; molybdopterin biosynthesis. In terms of biological role, catalyzes the cyclization of GTP to (8S)-3',8-cyclo-7,8-dihydroguanosine 5'-triphosphate. In Escherichia coli (strain K12 / MC4100 / BW2952), this protein is GTP 3',8-cyclase.